Consider the following 169-residue polypeptide: UPF0303 protein BOV_1367 (169 aa).

It belongs to the UPF0303 family.

The protein is UPF0303 protein BOV_1367 of Brucella ovis (strain ATCC 25840 / 63/290 / NCTC 10512).